Consider the following 141-residue polypeptide: Large ribosomal subunit protein uL16 (141 aa).

Residues 1–20 (MLMPKRTKYRKQQKGRNRGK) form a disordered region.

The protein belongs to the universal ribosomal protein uL16 family. Part of the 50S ribosomal subunit.

Binds 23S rRNA and is also seen to make contacts with the A and possibly P site tRNAs. This chain is Large ribosomal subunit protein uL16, found in Nautilia profundicola (strain ATCC BAA-1463 / DSM 18972 / AmH).